A 221-amino-acid polypeptide reads, in one-letter code: Adenylate kinase (221 aa).

10–15 (GAGKGT) contacts ATP. Residues 30-59 (STGDMLRAAVKAGTEFGVAAKKIMDAGGLV) form an NMP region. Residues threonine 31, arginine 36, 57 to 59 (GLV), 85 to 88 (GFPR), and glutamine 92 contribute to the AMP site. The tract at residues 122 to 159 (GRRVHPASGRTYHIKYNPPKVEGKDDVTGDALIQRDDD) is LID. ATP-binding positions include arginine 123 and 132–133 (TY). The AMP site is built by arginine 156 and arginine 167. Glycine 207 provides a ligand contact to ATP.

The protein belongs to the adenylate kinase family. In terms of assembly, monomer.

The protein resides in the cytoplasm. The enzyme catalyses AMP + ATP = 2 ADP. The protein operates within purine metabolism; AMP biosynthesis via salvage pathway; AMP from ADP: step 1/1. Its function is as follows. Catalyzes the reversible transfer of the terminal phosphate group between ATP and AMP. Plays an important role in cellular energy homeostasis and in adenine nucleotide metabolism. The sequence is that of Adenylate kinase from Polynucleobacter asymbioticus (strain DSM 18221 / CIP 109841 / QLW-P1DMWA-1) (Polynucleobacter necessarius subsp. asymbioticus).